The following is a 107-amino-acid chain: Benzene 1,2-dioxygenase system ferredoxin subunit (107 aa).

The region spanning 4–99 (TYILRQSDLP…IKVEGDEVHV (96 aa)) is the Rieske domain. 4 residues coordinate [2Fe-2S] cluster: Cys-43, His-45, Cys-62, and His-65.

The protein belongs to the bacterial ring-hydroxylating dioxygenase ferredoxin component family. As to quaternary structure, this dioxygenase system consists of four proteins: the two subunits of the hydroxylase component (BnzA and BnzB), a ferredoxin (BnzC) and a ferredoxin reductase (BnzD).

It participates in aromatic compound metabolism; benzene degradation; catechol from benzene: step 1/2. Its function is as follows. This protein seems to be a 2Fe-2S ferredoxin. The sequence is that of Benzene 1,2-dioxygenase system ferredoxin subunit (bnzC) from Pseudomonas putida (Arthrobacter siderocapsulatus).